Consider the following 483-residue polypeptide: Spore germination protein B1 (483 aa).

5 helical membrane passes run 289–309 (ILIT…HTGL), 323–343 (LNVP…IELI), 353–373 (PIGQ…AVQA), 375–395 (IVSA…FTVP), and 410–430 (VMIS…LFVI).

This sequence belongs to the GerABKA family.

The protein localises to the cell membrane. Functionally, involved in the response to the germinative mixture of L-asparagine, glucose, fructose and potassium ions (AGFK). Cannot stimulate germination in the absence of gerD and gerK gene products (fructose and glucose receptors respectively). The sequence is that of Spore germination protein B1 (gerBA) from Bacillus subtilis (strain 168).